The following is a 1859-amino-acid chain: Protein TIC 214 (1859 aa).

6 consecutive transmembrane segments (helical) span residues 18–38, 64–84, 87–107, 124–144, 172–192, and 221–241; these read IINSVVVVGLYYGFLTTFSIG, FITGQLMMFISIYYAPLHLAL, PHTITVLALPYLLFHFFWNNH, LSIQCVFLNNLIFQLFNHFIL, VGWLIGHILFMKWVGLVLFWI, and IFSILLFITCVYYLGRMPAPI. A disordered region spans residues 247–314; the sequence is KETSKTEERG…TEEIRVNGKE (68 aa). A compositionally biased stretch (acidic residues) spans 256–268; it reads GESEEERDVEIET. Residues 273–284 show a composition bias toward basic and acidic residues; it reads KGTKQEQERSTE. The span at 295–306 shows a compositional bias: acidic residues; sequence EKEDPDKIDETE.

It belongs to the TIC214 family. As to quaternary structure, part of the Tic complex.

It is found in the plastid. It localises to the chloroplast inner membrane. Involved in protein precursor import into chloroplasts. May be part of an intermediate translocation complex acting as a protein-conducting channel at the inner envelope. The sequence is that of Protein TIC 214 from Buxus microphylla (Littleleaf boxwood).